The chain runs to 551 residues: Hydroxymethylpyrimidine/phosphomethylpyrimidine kinase THI20 (551 aa).

Glutamine 64 is a 4-amino-5-hydroxymethyl-2-methylpyrimidine binding site. Catalysis depends on cysteine 468, which acts as the Nucleophile. Glutamate 540 acts as the Proton donor in catalysis.

In the N-terminal section; belongs to the ThiD family. It in the C-terminal section; belongs to the thiaminase-2 family.

The enzyme catalyses 4-amino-5-hydroxymethyl-2-methylpyrimidine + ATP = 4-amino-2-methyl-5-(phosphooxymethyl)pyrimidine + ADP + H(+). The catalysed reaction is 4-amino-2-methyl-5-(phosphooxymethyl)pyrimidine + ATP = 4-amino-2-methyl-5-(diphosphooxymethyl)pyrimidine + ADP. It catalyses the reaction thiamine + H2O = 5-(2-hydroxyethyl)-4-methylthiazole + 4-amino-5-hydroxymethyl-2-methylpyrimidine + H(+). It functions in the pathway cofactor biosynthesis; thiamine diphosphate biosynthesis; 4-amino-2-methyl-5-diphosphomethylpyrimidine from 5-amino-1-(5-phospho-D-ribosyl)imidazole: step 2/3. Its pathway is cofactor biosynthesis; thiamine diphosphate biosynthesis; 4-amino-2-methyl-5-diphosphomethylpyrimidine from 5-amino-1-(5-phospho-D-ribosyl)imidazole: step 3/3. Trifunctional protein with both thiamine biosynthetic and degradative activity. Within the thiamine biosynthesis pathway, catalyzes the phosphorylation of hydroxymethylpyrimidine (HMP) to hydroxymethylpyrimidine phosphate (HMP-P), as well as of HMP-P to HMP-PP. Also has thiaminase II activity and degrades thiamine using water as the nucleophile, resulting only in the formation of HMP (4-amino-2-methyl-5-hydroxymethylpyrimidine) and Thz (4-methyl-5-thiazole ethanol). The polypeptide is Hydroxymethylpyrimidine/phosphomethylpyrimidine kinase THI20 (Saccharomyces cerevisiae (strain ATCC 204508 / S288c) (Baker's yeast)).